A 291-amino-acid polypeptide reads, in one-letter code: uncharacterized protein (291 aa).

This is an uncharacterized protein from Lymantria dispar multicapsid nuclear polyhedrosis virus (LdMNPV).